Here is a 388-residue protein sequence, read N- to C-terminus: 5-hydroxytryptamine receptor 4 (388 aa).

The Extracellular segment spans residues 1-19 (MDKLDANVSSEEGFGSVEK). An N-linked (GlcNAc...) asparagine glycan is attached at asparagine 7. A helical transmembrane segment spans residues 20-44 (VVLLTFLSTVILMAILGNLLVMVAV). Residues 45–54 (CWDRQLRKIK) lie on the Cytoplasmic side of the membrane. A helical transmembrane segment spans residues 55–78 (TNYFIVSLAFADLLVSVLVMPFGA). Topologically, residues 79–92 (IELVQDIWIYGEVF) are extracellular. A helical membrane pass occupies residues 93 to 117 (CLVRTSLDVLLTTASIFHLCCISLD). An intrachain disulfide couples cysteine 93 to cysteine 184. Serotonin is bound at residue aspartate 100. The Cytoplasmic portion of the chain corresponds to 118–133 (RYYAICCQPLVYRNKM). A helical transmembrane segment spans residues 134–157 (TPLRIALMLGGCWVIPTFISFLPI). The Extracellular segment spans residues 158–188 (MQGWNNIGIIDLIEKRKFNQNSNSTYCVFMV). The helical transmembrane segment at 189–212 (NKPYAITCSVVAFYIPFLLMVLAY) threads the bilayer. Residues 213–257 (YRIYVTAKEHAHQIQMLQRAGASSESRPQSADQHSTHRMRTETKA) are Cytoplasmic-facing. Residues 258–283 (AKTLCIIMGCFCLCWAPFFVTNIVDP) traverse the membrane as a helical segment. Serotonin is bound at residue asparagine 279. Residues 284 to 290 (FIDYTVP) are Extracellular-facing. The helical transmembrane segment at 291-314 (GQVWTAFLWLGYINSGLNPFLYAF) threads the bilayer. The Cytoplasmic portion of the chain corresponds to 315–388 (LNKSFRRAFL…PLVAAQPSDT (74 aa)).

Belongs to the G-protein coupled receptor 1 family. As to quaternary structure, interacts (via C-terminus 330-346 AA) with GRK5; this interaction is promoted by 5-HT (serotonin). Interacts with MAGI2, MPP3, NHERF1 and SNX27 isoforms 1 and 2. Forms a complex including NHERF1 and EZR. In terms of assembly, interacts with PATJ, NOS1 and SEC23A. Expressed in ileum, brain, and atrium, but not in the ventricle. In terms of tissue distribution, mainly expressed in atria and cardiac ventricle. As to expression, expressed in all cardiovascular tissues analyzed.

It is found in the cell membrane. It localises to the endosome membrane. Its function is as follows. G-protein coupled receptor for 5-hydroxytryptamine (serotonin), a biogenic hormone that functions as a neurotransmitter, a hormone and a mitogen. Ligand binding causes a conformation change that triggers signaling via guanine nucleotide-binding proteins (G proteins) and modulates the activity of downstream effectors. HTR4 is coupled to G(s) G alpha proteins and mediates activation of adenylate cyclase activity. The protein is 5-hydroxytryptamine receptor 4 of Homo sapiens (Human).